We begin with the raw amino-acid sequence, 515 residues long: Bifunctional purine biosynthesis protein PurH (515 aa).

The 145-residue stretch at 1–145 (MTKRALISVS…KNHASVTVVV (145 aa)) folds into the MGS-like domain.

Belongs to the PurH family.

The catalysed reaction is (6R)-10-formyltetrahydrofolate + 5-amino-1-(5-phospho-beta-D-ribosyl)imidazole-4-carboxamide = 5-formamido-1-(5-phospho-D-ribosyl)imidazole-4-carboxamide + (6S)-5,6,7,8-tetrahydrofolate. It catalyses the reaction IMP + H2O = 5-formamido-1-(5-phospho-D-ribosyl)imidazole-4-carboxamide. It functions in the pathway purine metabolism; IMP biosynthesis via de novo pathway; 5-formamido-1-(5-phospho-D-ribosyl)imidazole-4-carboxamide from 5-amino-1-(5-phospho-D-ribosyl)imidazole-4-carboxamide (10-formyl THF route): step 1/1. It participates in purine metabolism; IMP biosynthesis via de novo pathway; IMP from 5-formamido-1-(5-phospho-D-ribosyl)imidazole-4-carboxamide: step 1/1. In Streptococcus pyogenes serotype M2 (strain MGAS10270), this protein is Bifunctional purine biosynthesis protein PurH.